Reading from the N-terminus, the 222-residue chain is MPQQGLAYPVPTLIYHITHLNNLQGILQRGGLLPYSQRPPTQQNVAYGHIQAHRAQVVVPVGPRGKLHDYVPFYFCPRSPMLYAIHTQQTDYQGDQRPILHLVSSAQKVAEARIPFVFTDRHAAVQYVCFFHKLEHLKALDWQAIQASYWANVREKKQAEFLVKDFFPWELVEEIGVIDKTIQAQVESILAQFPDLHHPPVRVRRSWYYKKRLCSASCEATF.

Positions 12–209 constitute a DarT domain; the sequence is TLIYHITHLN…PVRVRRSWYY (198 aa). Residues 16–18, Gly25, and Leu33 each bind NAD(+); that span reads HIT. The tract at residues 38–56 is NAD(+)-binding element; sequence RPPTQQNVAYGHIQAHRAQ. The DNA-binding element occupies 47-53; that stretch reads YGHIQAH. Arg54 serves as a coordination point for NAD(+). The active-site Proton acceptor is Arg54. DNA-binding regions lie at residues 78–83, 148–151, and 154–158; these read RSPMLY, SYWA, and REKKQ. Positions 119-160 are ADP-ribosylating turn-turn loop; the sequence is TDRHAAVQYVCFFHKLEHLKALDWQAIQASYWANVREKKQAE. Residue Glu160 is part of the active site.

This sequence belongs to the DarT ADP-ribosyltransferase family. Interacts with cognate antitoxin DarG (via C-terminus); this heterodimeric complex neutralizes the toxic effect of DarT by preventing ssDNA binding to DarT and consequently inactivating the toxin by direct protein-protein interactions.

It catalyses the reaction a thymidine in DNA + NAD(+) = an N-(ADP-alpha-D-ribosyl)-thymidine in DNA + nicotinamide + H(+). Toxic component of the hybrid type II/IV toxin-antitoxin (TA) system DarTG, which plays a crucial role in controlling bacterial growth and bacteriophage infection. Its toxic effect is neutralized by cognate antitoxin DarG. In case of phage infection, DarT toxin ADP-ribosylates DNA, which inhibits both viral DNA and RNA synthesis and leads to abortive infection. ADP-ribosylates ssDNA on the second thymidine of the consensus sequence 5'-TNTC-3'; the protein does not auto-modify. Has no activity on dsDNA in vitro. This leads to a decrease in DNA replication. Upon expression in E.coli inhibits cell growth, colony formation and induces the SOS response. Expression leads to bacteriostasis; however if cells grow over an hour in the presence of toxin, growth is no longer restored on antitoxin-inducing plates. In E.coli ADP-ribosylates genomic DNA (gDNA), which induces RecA expression (a marker for DNA damage). This chain is DNA ADP-ribosyl transferase, found in Thermus aquaticus (strain ATCC BAA-2747 / Y51MC23).